A 677-amino-acid polypeptide reads, in one-letter code: Protein asunder (677 aa).

Residues 515 to 540 (RLKLSKAKDQYRLLYRELEQLIQLNS) adopt a coiled-coil conformation. Over residues 578 to 598 (ESPLSPERLEPTSSSSSNSLL) the composition is skewed to low complexity. The tract at residues 578–604 (ESPLSPERLEPTSSSSSNSLLKARKRR) is disordered. Residues 598–604 (LKARKRR) carry the Nuclear localization signal (NLS) motif.

Belongs to the Integrator subunit 13 family. In terms of assembly, belongs to the multiprotein complex Integrator, at least composed of IntS1, IntS2, IntS3, IntS4, omd/IntS5, IntS6, defl/IntS7, IntS8, IntS9, IntS10, IntS11, IntS12, asun/IntS13, IntS14 and IntS15. The core complex associates with protein phosphatase 2A subunits mts/PP2A and Pp2A-29B, to form the Integrator-PP2A (INTAC) complex. In terms of processing, phosphorylated.

Its subcellular location is the nucleus. The protein localises to the cytoplasm. It localises to the perinuclear region. Functionally, component of the integrator complex, a multiprotein complex that terminates RNA polymerase II (Pol II) transcription in the promoter-proximal region of genes. The integrator complex provides a quality checkpoint during transcription elongation by driving premature transcription termination of transcripts that are unfavorably configured for transcriptional elongation: the complex terminates transcription by (1) catalyzing dephosphorylation of the C-terminal domain (CTD) of Pol II subunit Polr2A/Rbp1 and Spt5, and (2) degrading the exiting nascent RNA transcript via endonuclease activity. The integrator complex is also involved in the 3'-end processing of the U7 snRNA, and also the spliceosomal snRNAs U1, U2, U4 and U5. This is Protein asunder (asun) from Drosophila willistoni (Fruit fly).